The sequence spans 337 residues: L-Ala-D/L-amino acid epimerase (337 aa).

Residues Thr-129 and Lys-151–Lys-153 contribute to the substrate site. Mg(2+)-binding residues include Asp-177, Glu-203, and Asp-228. Substrate-binding positions include Lys-250 and Asp-300–Asp-302.

Belongs to the mandelate racemase/muconate lactonizing enzyme family. Requires Mg(2+) as cofactor.

In terms of biological role, broad specificity dipeptide epimerase. Catalyzes the epimerization of L-Ala-L-Ala, L-Ala-L-Glu, L-Ala-L-Ser, L-Ala-L-Thr and L-Ala-L-Met (in vitro). The chain is L-Ala-D/L-amino acid epimerase from Maribacter sp. (strain HTCC2170 / KCCM 42371).